The primary structure comprises 617 residues: MAKILGIDLGTTNSCMAVMEGGDAVVLPNAEGSRTTPSVVGFSKKGEKLVGQVAKRQAISNPENTVYSIKRHMGEANYKVTLNGKTYTPQEISAMILQKLKTEAEAYLGETIKQAVITVPAYFNDAQRQATKDAGSIAGLEVLRIINEPTAASLAYGLDKGDVDQKILVYDLGGGTFDVSILELGGGVFEVKSTSGDTHLGGDDFDQRVIDHLLAEFKKTEGIDLSKDKAILQRLKDAAEKAKIELSGVTVTNINLPFLTVGPDGEPKHMDIDLTRAQFQKMTEDLLEKTLVSMRRALSDSKLTPNDLDKVILVGGATRMPAVVELVENFTGKKPYKNINPDEAVAIGAAIQAGVLGGEVKDVLLLDVTPLTLGIETLGGIATPLIQRNTTIPTKKSQIFSTAADNQPSVEIHVLQGERGIASENKTLGRFTLDGIPPAPRGIPQIEVAFDIDANGILHVNAKDLGTGKEQSISIQKPGGLSDAEIERMVKDAELHAEEDKKRKEEVETRNNAEALINAAEKTIKEAGDVATEDQKSKVNAAIEDLKKALEGKDTEEVKAKTEALQEAVYPISTAMYQKAQQEAQQASGEAGSADARGPDETVVDADYEVVDDEKRK.

A disordered region spans residues 579–617 (KAQQEAQQASGEAGSADARGPDETVVDADYEVVDDEKRK). Over residues 580–594 (AQQEAQQASGEAGSA) the composition is skewed to low complexity. Residues 602 to 617 (TVVDADYEVVDDEKRK) show a composition bias toward acidic residues.

The protein belongs to the heat shock protein 70 family.

In terms of biological role, acts as a chaperone. This chain is Chaperone protein DnaK, found in Methanosarcina acetivorans (strain ATCC 35395 / DSM 2834 / JCM 12185 / C2A).